Reading from the N-terminus, the 293-residue chain is Tyrosine recombinase XerD (293 aa).

The Core-binding (CB) domain maps to 1–83 (MHGLIADFIH…ALRKFYRFLL (83 aa)). The Tyr recombinase domain maps to 104–287 (HLPATLSGTE…SNQHLVAVYH (184 aa)). Catalysis depends on residues R144, K168, H239, R242, and H265. Y274 acts as the O-(3'-phospho-DNA)-tyrosine intermediate in catalysis.

The protein belongs to the 'phage' integrase family. XerD subfamily. Forms a cyclic heterotetrameric complex composed of two molecules of XerC and two molecules of XerD.

The protein localises to the cytoplasm. Site-specific tyrosine recombinase, which acts by catalyzing the cutting and rejoining of the recombining DNA molecules. The XerC-XerD complex is essential to convert dimers of the bacterial chromosome into monomers to permit their segregation at cell division. It also contributes to the segregational stability of plasmids. The chain is Tyrosine recombinase XerD from Lacticaseibacillus casei (Lactobacillus casei).